Consider the following 657-residue polypeptide: Histidine ammonia-lyase (657 aa).

Positions Ala253 to Gly255 form a cross-link, 5-imidazolinone (Ala-Gly). The residue at position 254 (Ser254) is a 2,3-didehydroalanine (Ser). A Phosphothreonine modification is found at Thr396. Ser635 is modified (phosphoserine). A Phosphothreonine modification is found at Thr637. At Ser648 the chain carries Phosphoserine.

It belongs to the PAL/histidase family. Post-translationally, contains an active site 4-methylidene-imidazol-5-one (MIO), which is formed autocatalytically by cyclization and dehydration of residues Ala-Ser-Gly.

It carries out the reaction L-histidine = trans-urocanate + NH4(+). It participates in amino-acid degradation; L-histidine degradation into L-glutamate; N-formimidoyl-L-glutamate from L-histidine: step 1/3. This is Histidine ammonia-lyase (Hal) from Mus musculus (Mouse).